The following is a 208-amino-acid chain: Uracil phosphoribosyltransferase (208 aa).

5-phospho-alpha-D-ribose 1-diphosphate is bound by residues arginine 78, arginine 103, and 130-138 (DPMLATANS). Residues isoleucine 193 and 198–200 (GDA) each bind uracil. Aspartate 199 contacts 5-phospho-alpha-D-ribose 1-diphosphate.

The protein belongs to the UPRTase family. It depends on Mg(2+) as a cofactor.

The catalysed reaction is UMP + diphosphate = 5-phospho-alpha-D-ribose 1-diphosphate + uracil. It participates in pyrimidine metabolism; UMP biosynthesis via salvage pathway; UMP from uracil: step 1/1. With respect to regulation, allosterically activated by GTP. Its function is as follows. Catalyzes the conversion of uracil and 5-phospho-alpha-D-ribose 1-diphosphate (PRPP) to UMP and diphosphate. This is Uracil phosphoribosyltransferase from Brucella canis (strain ATCC 23365 / NCTC 10854 / RM-666).